A 93-amino-acid polypeptide reads, in one-letter code: Large ribosomal subunit protein bL31B (93 aa).

This sequence belongs to the bacterial ribosomal protein bL31 family. Type B subfamily. Part of the 50S ribosomal subunit.

The sequence is that of Large ribosomal subunit protein bL31B from Pseudomonas syringae pv. tomato (strain ATCC BAA-871 / DC3000).